The primary structure comprises 122 residues: Large ribosomal subunit protein uL14 (122 aa).

Belongs to the universal ribosomal protein uL14 family. Part of the 50S ribosomal subunit. Forms a cluster with proteins L3 and L19. In the 70S ribosome, L14 and L19 interact and together make contacts with the 16S rRNA in bridges B5 and B8.

Binds to 23S rRNA. Forms part of two intersubunit bridges in the 70S ribosome. The polypeptide is Large ribosomal subunit protein uL14 (Nocardioides sp. (strain ATCC BAA-499 / JS614)).